Here is a 260-residue protein sequence, read N- to C-terminus: MTQLSVNVNKIATLRNSRGGSLPSVLKLSELILDSGAHGITVHPRSDERHITKQDVFELQEFLRTYNEKITKLGISKKEYNIEGEPSERFLDLVLKAKPDQATLVPVKPGEITSDHGFQFADQKTFSTLKPIVEAIRKEGIRVSLFMETDFTFYDQVVALGAERIELYTGPFAHAFDLSEEKGKEIFTDYQRAAIEANKLGLAVNAGHDLDTNNLRVFAKLPYLKEVSIGHRLMAQSLVDGLETTVKSYLKVLSLGNETE.

N7 and R18 together coordinate 3-amino-2-oxopropyl phosphate. The Proton acceptor role is filled by H43. 2 residues coordinate 1-deoxy-D-xylulose 5-phosphate: R45 and H50. E83 acts as the Proton acceptor in catalysis. T113 is a 1-deoxy-D-xylulose 5-phosphate binding site. The active-site Proton donor is H208. Residues D209 and 230–231 (GH) contribute to the 3-amino-2-oxopropyl phosphate site.

This sequence belongs to the PNP synthase family. Homooctamer; tetramer of dimers.

It localises to the cytoplasm. The enzyme catalyses 3-amino-2-oxopropyl phosphate + 1-deoxy-D-xylulose 5-phosphate = pyridoxine 5'-phosphate + phosphate + 2 H2O + H(+). The protein operates within cofactor biosynthesis; pyridoxine 5'-phosphate biosynthesis; pyridoxine 5'-phosphate from D-erythrose 4-phosphate: step 5/5. In terms of biological role, catalyzes the complicated ring closure reaction between the two acyclic compounds 1-deoxy-D-xylulose-5-phosphate (DXP) and 3-amino-2-oxopropyl phosphate (1-amino-acetone-3-phosphate or AAP) to form pyridoxine 5'-phosphate (PNP) and inorganic phosphate. This Leptospira biflexa serovar Patoc (strain Patoc 1 / Ames) protein is Pyridoxine 5'-phosphate synthase.